The primary structure comprises 166 residues: Lipoprotein signal peptidase (166 aa).

3 consecutive transmembrane segments (helical) span residues 12–32 (WLWLVVVVLIIDLGSKFLILQ), 70–90 (WFFAGIALGICLVLTVMMYRA), and 102–122 (ALIIGGALGNLFDRLWHGFVV). Residues aspartate 123 and aspartate 141 contribute to the active site. A helical transmembrane segment spans residues 142-162 (SAICFGAAMIVLEGFLPNAAA).

The protein belongs to the peptidase A8 family.

Its subcellular location is the cell inner membrane. It carries out the reaction Release of signal peptides from bacterial membrane prolipoproteins. Hydrolyzes -Xaa-Yaa-Zaa-|-(S,diacylglyceryl)Cys-, in which Xaa is hydrophobic (preferably Leu), and Yaa (Ala or Ser) and Zaa (Gly or Ala) have small, neutral side chains.. It functions in the pathway protein modification; lipoprotein biosynthesis (signal peptide cleavage). Functionally, this protein specifically catalyzes the removal of signal peptides from prolipoproteins. This chain is Lipoprotein signal peptidase, found in Enterobacter sp. (strain 638).